Here is a 119-residue protein sequence, read N- to C-terminus: Large ribosomal subunit protein uL24 (119 aa).

Belongs to the universal ribosomal protein uL24 family. Part of the 50S ribosomal subunit.

Functionally, one of two assembly initiator proteins, it binds directly to the 5'-end of the 23S rRNA, where it nucleates assembly of the 50S subunit. Its function is as follows. Located at the polypeptide exit tunnel on the outside of the subunit. The protein is Large ribosomal subunit protein uL24 of Methanosarcina acetivorans (strain ATCC 35395 / DSM 2834 / JCM 12185 / C2A).